Reading from the N-terminus, the 140-residue chain is Small ribosomal subunit protein uS9A (140 aa).

It belongs to the universal ribosomal protein uS9 family. Component of the small ribosomal subunit (SSU). Mature yeast ribosomes consist of a small (40S) and a large (60S) subunit. The 40S small subunit contains 1 molecule of ribosomal RNA (18S rRNA) and at least 33 different proteins. The large 60S subunit contains 3 rRNA molecules (25S, 5.8S and 5S rRNA) and at least 46 different proteins.

Its subcellular location is the cytoplasm. Its function is as follows. Component of the ribosome, a large ribonucleoprotein complex responsible for the synthesis of proteins in the cell. The small ribosomal subunit (SSU) binds messenger RNAs (mRNAs) and translates the encoded message by selecting cognate aminoacyl-transfer RNA (tRNA) molecules. The large subunit (LSU) contains the ribosomal catalytic site termed the peptidyl transferase center (PTC), which catalyzes the formation of peptide bonds, thereby polymerizing the amino acids delivered by tRNAs into a polypeptide chain. The nascent polypeptides leave the ribosome through a tunnel in the LSU and interact with protein factors that function in enzymatic processing, targeting, and the membrane insertion of nascent chains at the exit of the ribosomal tunnel. The protein is Small ribosomal subunit protein uS9A (rps1601) of Schizosaccharomyces pombe (strain 972 / ATCC 24843) (Fission yeast).